Consider the following 510-residue polypeptide: 2-isopropylmalate synthase (510 aa).

The region spanning 5-267 (LVIFDTTLRD…DTRIDTTQIV (263 aa)) is the Pyruvate carboxyltransferase domain. Mn(2+) is bound by residues aspartate 14, histidine 202, histidine 204, and asparagine 238. The segment at 392–510 (RLLSLHAVSE…SSLERTHPQI (119 aa)) is regulatory domain.

The protein belongs to the alpha-IPM synthase/homocitrate synthase family. LeuA type 1 subfamily. Homodimer. It depends on Mn(2+) as a cofactor.

The protein resides in the cytoplasm. It carries out the reaction 3-methyl-2-oxobutanoate + acetyl-CoA + H2O = (2S)-2-isopropylmalate + CoA + H(+). The protein operates within amino-acid biosynthesis; L-leucine biosynthesis; L-leucine from 3-methyl-2-oxobutanoate: step 1/4. Catalyzes the condensation of the acetyl group of acetyl-CoA with 3-methyl-2-oxobutanoate (2-ketoisovalerate) to form 3-carboxy-3-hydroxy-4-methylpentanoate (2-isopropylmalate). This Nitrosomonas europaea (strain ATCC 19718 / CIP 103999 / KCTC 2705 / NBRC 14298) protein is 2-isopropylmalate synthase.